The primary structure comprises 212 residues: dTTP/UTP pyrophosphatase (212 aa).

Asp88 serves as the catalytic Proton acceptor.

It belongs to the Maf family. YhdE subfamily. A divalent metal cation is required as a cofactor.

Its subcellular location is the cytoplasm. The catalysed reaction is dTTP + H2O = dTMP + diphosphate + H(+). It catalyses the reaction UTP + H2O = UMP + diphosphate + H(+). Nucleoside triphosphate pyrophosphatase that hydrolyzes dTTP and UTP. May have a dual role in cell division arrest and in preventing the incorporation of modified nucleotides into cellular nucleic acids. The chain is dTTP/UTP pyrophosphatase from Colwellia psychrerythraea (strain 34H / ATCC BAA-681) (Vibrio psychroerythus).